Consider the following 262-residue polypeptide: Thiazole synthase (262 aa).

Residue Lys-95 is the Schiff-base intermediate with DXP of the active site. 1-deoxy-D-xylulose 5-phosphate is bound by residues Gly-156, 182–183 (AG), and 204–205 (NT).

This sequence belongs to the ThiG family. Homotetramer. Forms heterodimers with either ThiH or ThiS.

It localises to the cytoplasm. The catalysed reaction is [ThiS sulfur-carrier protein]-C-terminal-Gly-aminoethanethioate + 2-iminoacetate + 1-deoxy-D-xylulose 5-phosphate = [ThiS sulfur-carrier protein]-C-terminal Gly-Gly + 2-[(2R,5Z)-2-carboxy-4-methylthiazol-5(2H)-ylidene]ethyl phosphate + 2 H2O + H(+). It functions in the pathway cofactor biosynthesis; thiamine diphosphate biosynthesis. Its function is as follows. Catalyzes the rearrangement of 1-deoxy-D-xylulose 5-phosphate (DXP) to produce the thiazole phosphate moiety of thiamine. Sulfur is provided by the thiocarboxylate moiety of the carrier protein ThiS. In vitro, sulfur can be provided by H(2)S. The polypeptide is Thiazole synthase (Yersinia enterocolitica serotype O:8 / biotype 1B (strain NCTC 13174 / 8081)).